A 275-amino-acid chain; its full sequence is F420-dependent methylenetetrahydromethanopterin dehydrogenase (275 aa).

The protein belongs to the MTD family.

It catalyses the reaction 5,10-methylenetetrahydromethanopterin + oxidized coenzyme F420-(gamma-L-Glu)(n) + 2 H(+) = 5,10-methenyl-5,6,7,8-tetrahydromethanopterin + reduced coenzyme F420-(gamma-L-Glu)(n). Its pathway is one-carbon metabolism; methanogenesis from CO(2); 5,10-methylene-5,6,7,8-tetrahydromethanopterin from 5,10-methenyl-5,6,7,8-tetrahydromethanopterin (coenzyme F420 route): step 1/1. Its function is as follows. Catalyzes the reversible reduction of methenyl-H(4)MPT(+) to methylene-H(4)MPT. The protein is F420-dependent methylenetetrahydromethanopterin dehydrogenase of Methanobrevibacter smithii (strain ATCC 35061 / DSM 861 / OCM 144 / PS).